The primary structure comprises 251 residues: Flap endonuclease Xni (251 aa).

Aspartate 104 provides a ligand contact to Mg(2+). Positions 160–249 (VLPRQLPDYW…IDGNLQQLRL (90 aa)) constitute a 5'-3' exonuclease domain. Residues leucine 171, alanine 172, proline 180, valine 182, and isoleucine 185 each contribute to the K(+) site. The segment at 184 to 189 (GIGPKS) is interaction with DNA.

Belongs to the Xni family. Requires Mg(2+) as cofactor. K(+) is required as a cofactor.

Has flap endonuclease activity. During DNA replication, flap endonucleases cleave the 5'-overhanging flap structure that is generated by displacement synthesis when DNA polymerase encounters the 5'-end of a downstream Okazaki fragment. The sequence is that of Flap endonuclease Xni from Salmonella heidelberg (strain SL476).